The primary structure comprises 327 residues: Peroxidase 15 (327 aa).

The signal sequence occupies residues 1–23 (MASFSPLLAMALAIFIFSSHSNA). Gln-24 is modified (pyrrolidone carboxylic acid). Intrachain disulfides connect Cys-34–Cys-115, Cys-67–Cys-72, Cys-121–Cys-323, and Cys-200–Cys-232. N-linked (GlcNAc...) asparagine glycosylation occurs at Asn-36. His-65 acts as the Proton acceptor in catalysis. Residues Asp-66, Val-69, Gly-71, Asp-73, and Ser-75 each coordinate Ca(2+). N-linked (GlcNAc...) asparagine glycosylation is found at Asn-81, Asn-96, and Asn-159. Pro-163 is a binding site for substrate. Residues Asn-168 and Asn-171 are each glycosylated (N-linked (GlcNAc...) asparagine). Residue His-193 coordinates heme b. Thr-194 contacts Ca(2+). Asn-209 and Asn-221 each carry an N-linked (GlcNAc...) asparagine glycan. The Ca(2+) site is built by Asp-245, Thr-248, and Asp-253. 2 N-linked (GlcNAc...) asparagine glycosylation sites follow: Asn-287 and Asn-291.

Belongs to the peroxidase family. Classical plant (class III) peroxidase subfamily. The cofactor is Ca(2+). Requires heme b as cofactor.

Its subcellular location is the secreted. The enzyme catalyses 2 a phenolic donor + H2O2 = 2 a phenolic radical donor + 2 H2O. Removal of H(2)O(2), oxidation of toxic reductants, biosynthesis and degradation of lignin, suberization, auxin catabolism, response to environmental stresses such as wounding, pathogen attack and oxidative stress. These functions might be dependent on each isozyme/isoform in each plant tissue. This is Peroxidase 15 from Ipomoea batatas (Sweet potato).